The primary structure comprises 645 residues: Threonine--tRNA ligase (645 aa).

The 63-residue stretch at 1 to 63 (MNQINIQFPD…EQDGAIEIIT (63 aa)) folds into the TGS domain. A catalytic region spans residues 242-540 (DHRKIGKDLE…LTEETKGAFP (299 aa)). 3 residues coordinate Zn(2+): Cys336, His387, and His517.

It belongs to the class-II aminoacyl-tRNA synthetase family. Homodimer. Zn(2+) serves as cofactor.

It is found in the cytoplasm. It carries out the reaction tRNA(Thr) + L-threonine + ATP = L-threonyl-tRNA(Thr) + AMP + diphosphate + H(+). Catalyzes the attachment of threonine to tRNA(Thr) in a two-step reaction: L-threonine is first activated by ATP to form Thr-AMP and then transferred to the acceptor end of tRNA(Thr). Also edits incorrectly charged L-seryl-tRNA(Thr). The polypeptide is Threonine--tRNA ligase (Staphylococcus epidermidis (strain ATCC 35984 / DSM 28319 / BCRC 17069 / CCUG 31568 / BM 3577 / RP62A)).